Here is a 340-residue protein sequence, read N- to C-terminus: MNVFEPRLSSWLENAGDDDDVVLSSRIRLARNLKDEQFPVYEQKEEIVDNIAEVFDDNFTLIKMNQISLLQKALLVEKHLISPYMMNKSEYGAVLLNEEENVSIMLNEEDHLRIQCMTPGLRLFDALEAALQIDGYVEEKLSYAFDKEFGYLTSCVTNIGTGMRASVMVHLPGLVTTKRIKSVIEAIRSLGFVVRGIYGEGSMPASNIFQVSNQVTLGKTETEIVEDLTQVMEQIIMQERVARTTIKQKFHIALEDRVFRSYGLLMNCRIISMKEASDAISDIRLGVELGFFEHISRQKMNELVLFSQPAFLRREAGRDMDELEEKVIRAKVIREILGDK.

In terms of domain architecture, Phosphagen kinase C-terminal spans 21-242 (VVLSSRIRLA…EQIIMQERVA (222 aa)). Residues 24–28 (SSRIR), His79, Arg113, 164–168 (RASVM), and 195–200 (RGIYGE) each bind ATP.

Belongs to the ATP:guanido phosphotransferase family.

It carries out the reaction L-arginyl-[protein] + ATP = N(omega)-phospho-L-arginyl-[protein] + ADP + H(+). Catalyzes the specific phosphorylation of arginine residues in proteins. The protein is Protein-arginine kinase of Listeria monocytogenes serotype 4b (strain F2365).